We begin with the raw amino-acid sequence, 104 residues long: Inclusion membrane protein F (104 aa).

Helical transmembrane passes span 39–59 (LVVA…SLVA) and 70–90 (LAVL…VLFI).

It localises to the secreted. It is found in the host vacuole. The protein localises to the host pathogen-containing vacuole. Its subcellular location is the host pathogen-containing vacuole membrane. In terms of biological role, inclusion membrane protein probably involved in early modification events of the chlamydial inclusion. The sequence is that of Inclusion membrane protein F (incF) from Chlamydia trachomatis serovar D (strain ATCC VR-885 / DSM 19411 / UW-3/Cx).